Here is a 341-residue protein sequence, read N- to C-terminus: Nucleoid-associated protein Sden_2335 (341 aa).

It belongs to the YejK family.

The protein localises to the cytoplasm. Its subcellular location is the nucleoid. This Shewanella denitrificans (strain OS217 / ATCC BAA-1090 / DSM 15013) protein is Nucleoid-associated protein Sden_2335.